Reading from the N-terminus, the 895-residue chain is Probable aminodeoxychorismate synthase, chloroplastic (895 aa).

Residues 1–45 form a disordered region; sequence MAALRLPTPPPPRAPAPWLHSSHRRRVAAPRGAGGGGGGGGAVPP. A chloroplast-targeting transit peptide spans 1 to 48; sequence MAALRLPTPPPPRAPAPWLHSSHRRRVAAPRGAGGGGGGGGAVPPPPV. Residues 32-42 are compositionally biased toward gly residues; the sequence is GAGGGGGGGGA. The Glutamine amidotransferase type-1 domain occupies 49 to 307; that stretch reads RTLLIDNYDS…KKITTDFGLQ (259 aa). Cys-135 serves as the catalytic Nucleophile. Catalysis depends on residues His-281 and Glu-283. A PABB component region spans residues 387-875; sequence IFSVLFGHHS…KAKAPTKVVE (489 aa).

In the C-terminal section; belongs to the anthranilate synthase component I family.

Its subcellular location is the plastid. The protein resides in the chloroplast. The enzyme catalyses chorismate + L-glutamine = 4-amino-4-deoxychorismate + L-glutamate. It participates in cofactor biosynthesis; tetrahydrofolate biosynthesis; 4-aminobenzoate from chorismate: step 1/2. The protein operates within antibiotic biosynthesis; candicidin biosynthesis. Bifunctional enzyme that catalyzes the biosynthesis of 4-amino-4-deoxychorismate (ADC) from chorismate and glutamine. In the first step, a glutamine amidotransferase generates ammonia that is channelled between the binding sites of glutamine and chorismate and used along with chorismate in the second step, catalyzed by aminodeoxychorismate synthase, to produce ADC. Required for the synthesis of 4-aminobenzoate (PABA), an important component in tetrahydrofolate biosynthesis. Does not possess ADC lyase activity. The chain is Probable aminodeoxychorismate synthase, chloroplastic (ADCS) from Oryza sativa subsp. japonica (Rice).